Consider the following 648-residue polypeptide: RalA-binding protein 1 (648 aa).

Positions Met1 to Asp158 are disordered. Thr2 carries the post-translational modification N-acetylthreonine. Residues Leu24–Ile33 are compositionally biased toward polar residues. A phosphoserine mark is found at Ser29, Ser30, and Ser34. Position 44 is a phosphothreonine (Thr44). Ser48 and Ser62 each carry phosphoserine. Basic and acidic residues predominate over residues Asp52–His68. Residue Gly69–Lys74 coordinates ATP. Over residues Gly69–Glu79 the composition is skewed to basic residues. Phosphoserine occurs at positions 92 and 93. Over residues Lys102 to Ser118 the composition is skewed to basic residues. Residues Lys102–Lys119 form a nuclear localization signal region. The segment covering Lys119–Thr155 has biased composition (basic and acidic residues). The segment at Leu154 to Tyr219 is mediates association with membranes and could form transmembrane domains. The 189-residue stretch at Val192–Leu380 folds into the Rho-GAP domain. Residues Arg403–Met499 form a mediates interaction with RALA and RALB region. Gly418–Lys425 is an ATP binding site. 2 positions are modified to phosphoserine: Ser461 and Ser463. Positions Glu500–Ile648 are mediates interaction with REPS1 and REPS2. 2 disordered regions span residues Gln525–Leu552 and Arg598–Ile648. The span at Glu536–Leu552 shows a compositional bias: acidic residues. Basic and acidic residues predominate over residues Arg629–Ile648. A Phosphoserine modification is found at Ser638.

In terms of assembly, interacts with the GTP-bound form of RALA (via effector domain); during mitosis, recruits RALBP1 to the mitochondrion where it promotes DNM1L phosphorylation and mitochondrial fission. Interacts with DNM1L; mediates its mitotic kinase cyclin B-CDK1-mediated phosphorylation during mitosis to promote mitochondrial fission. Interacts with the mitotic kinase cyclin B-CDK1 during mitosis. Interacts with the GTP-bound form of RALB (via effector domain). Interacts with REPS1; the interaction is direct and does not affect RALA-binding nor GTPase activator activity of RALBP1. Interacts with REPS2; the interaction is direct and does not affect RALA-binding nor GTPase activator activity of RALBP1. Interacts with EPN1, NUMB and TFAP2A during interphase and mitosis. Interacts with AP2M1; as part of the AP2 complex. Interacts with CDC42. Interacts with RAC1. Post-translationally, tyrosine-phosphorylated upon stimulation of cells with EGF. In terms of processing, may undergo proteolytic cleavage to give peptides which reassemble to form a transporter complex. Ubiquitous. The highest level of expression was observed in ovaries and skeletal muscle, whereas the lowest was found in spleen, liver and peripheral blood leukocytes.

The protein resides in the cell membrane. It is found in the cytoplasm. Its subcellular location is the cytosol. It localises to the cytoskeleton. The protein localises to the spindle pole. The protein resides in the nucleus. It is found in the mitochondrion. It carries out the reaction an S-substituted glutathione(in) + ATP + H2O = an S-substituted glutathione(out) + ADP + phosphate + H(+). The enzyme catalyses ATP + H2O + xenobioticSide 1 = ADP + phosphate + xenobioticSide 2.. It catalyses the reaction leukotriene C4(in) + ATP + H2O = leukotriene C4(out) + ADP + phosphate + H(+). Multifunctional protein that functions as a downstream effector of RALA and RALB. As a GTPase-activating protein/GAP can inactivate CDC42 and RAC1 by stimulating their GTPase activity. As part of the Ral signaling pathway, may also regulate ligand-dependent EGF and insulin receptors-mediated endocytosis. During mitosis, may act as a scaffold protein in the phosphorylation of EPSIN/EPN1 by the mitotic kinase cyclin B-CDK1, preventing endocytosis during that phase of the cell cycle. During mitosis, also controls mitochondrial fission as an effector of RALA. Recruited to mitochondrion by RALA, acts as a scaffold to foster the mitotic kinase cyclin B-CDK1-mediated phosphorylation and activation of DNM1L. In terms of biological role, could also function as a primary ATP-dependent active transporter for glutathione conjugates of electrophiles. May also actively catalyze the efflux of a wide range of substrates including xenobiotics like doxorubicin (DOX) contributing to cell multidrug resistance. This is RalA-binding protein 1 from Mus musculus (Mouse).